Here is a 365-residue protein sequence, read N- to C-terminus: tRNA dimethylallyltransferase (365 aa).

23-30 (APTASGKT) is a binding site for ATP. 25–30 (TASGKT) serves as a coordination point for substrate. 3 interaction with substrate tRNA regions span residues 48-51 (DSAL), 172-176 (QRITR), and 256-261 (RCVGYR).

The protein belongs to the IPP transferase family. In terms of assembly, monomer. The cofactor is Mg(2+).

The enzyme catalyses adenosine(37) in tRNA + dimethylallyl diphosphate = N(6)-dimethylallyladenosine(37) in tRNA + diphosphate. In terms of biological role, catalyzes the transfer of a dimethylallyl group onto the adenine at position 37 in tRNAs that read codons beginning with uridine, leading to the formation of N6-(dimethylallyl)adenosine (i(6)A). The polypeptide is tRNA dimethylallyltransferase (Psychrobacter sp. (strain PRwf-1)).